A 374-amino-acid chain; its full sequence is UDP-N-acetylglucosamine--N-acetylmuramyl-(pentapeptide) pyrophosphoryl-undecaprenol N-acetylglucosamine transferase (374 aa).

UDP-N-acetyl-alpha-D-glucosamine-binding positions include Thr13–Gly15, Asn124, Arg165, Ser193, and Gln294.

It belongs to the glycosyltransferase 28 family. MurG subfamily.

It localises to the cell inner membrane. It catalyses the reaction di-trans,octa-cis-undecaprenyl diphospho-N-acetyl-alpha-D-muramoyl-L-alanyl-D-glutamyl-meso-2,6-diaminopimeloyl-D-alanyl-D-alanine + UDP-N-acetyl-alpha-D-glucosamine = di-trans,octa-cis-undecaprenyl diphospho-[N-acetyl-alpha-D-glucosaminyl-(1-&gt;4)]-N-acetyl-alpha-D-muramoyl-L-alanyl-D-glutamyl-meso-2,6-diaminopimeloyl-D-alanyl-D-alanine + UDP + H(+). Its pathway is cell wall biogenesis; peptidoglycan biosynthesis. In terms of biological role, cell wall formation. Catalyzes the transfer of a GlcNAc subunit on undecaprenyl-pyrophosphoryl-MurNAc-pentapeptide (lipid intermediate I) to form undecaprenyl-pyrophosphoryl-MurNAc-(pentapeptide)GlcNAc (lipid intermediate II). The protein is UDP-N-acetylglucosamine--N-acetylmuramyl-(pentapeptide) pyrophosphoryl-undecaprenol N-acetylglucosamine transferase of Rhizobium etli (strain ATCC 51251 / DSM 11541 / JCM 21823 / NBRC 15573 / CFN 42).